A 246-amino-acid polypeptide reads, in one-letter code: MASLSRPSLPSCLCSFLLLLLQVSSSYAGQFRVIGPRHPIRALVGDEVELPCRISPGKNATGMEVGWYRPPFSRVVHLYRNGKDQDGEQAPEYRGRTELLKDAIGEGKVTLRIRNVRFSDEGGFTCFFRDHSYQEEAAMELKVEDPFYWVSPGVLVLLAVLPVLLLQIAVGLVFLCLQYRLRGKLRAEIENLHRTFDPHFLRVPCWKITLFVIVPVLGPLVALIICYNWLHRRLAGQFLEELRNPF.

Positions 1–28 (MASLSRPSLPSCLCSFLLLLLQVSSSYA) are cleaved as a signal peptide. Topologically, residues 29-153 (GQFRVIGPRH…EDPFYWVSPG (125 aa)) are extracellular. In terms of domain architecture, Ig-like V-type spans 30-144 (QFRVIGPRHP…EEAAMELKVE (115 aa)). A disulfide bridge connects residues Cys52 and Cys126. N-linked (GlcNAc...) asparagine glycosylation occurs at Asn59. The helical transmembrane segment at 154–174 (VLVLLAVLPVLLLQIAVGLVF) threads the bilayer. Residues 175-209 (LCLQYRLRGKLRAEIENLHRTFDPHFLRVPCWKIT) are Cytoplasmic-facing. The chain crosses the membrane as a helical span at residues 210–230 (LFVIVPVLGPLVALIICYNWL). Topologically, residues 231-246 (HRRLAGQFLEELRNPF) are extracellular.

The protein belongs to the immunoglobulin superfamily. BTN/MOG family. As to quaternary structure, homodimer.

Its subcellular location is the membrane. In terms of biological role, minor component of the myelin sheath. May be involved in completion and/or maintenance of the myelin sheath and in cell-cell communication. Mediates homophilic cell-cell adhesion. The protein is Myelin-oligodendrocyte glycoprotein (MOG) of Pongo abelii (Sumatran orangutan).